The following is a 267-amino-acid chain: 14-3-3-like protein GF14 phi (267 aa).

Position 2 is an N-acetylalanine (alanine 2). Residues serine 73 and serine 196 each carry the phosphoserine modification. A Phosphothreonine modification is found at threonine 217. A disordered region spans residues 244–267; that stretch reads MQDESPEEIKEAAAPKPAEEQKEI. Serine 248 carries the phosphoserine modification. Residues 250-267 show a composition bias toward basic and acidic residues; it reads EEIKEAAAPKPAEEQKEI.

It belongs to the 14-3-3 family. Interacts with FD. Interacts with CINV1.

Its subcellular location is the nucleus. It localises to the cytoplasm. Its function is as follows. Is associated with a DNA binding complex that binds to the G box, a well-characterized cis-acting DNA regulatory element found in plant genes. This is 14-3-3-like protein GF14 phi (GRF4) from Arabidopsis thaliana (Mouse-ear cress).